A 339-amino-acid chain; its full sequence is Dicamba O-demethylase, oxygenase component (339 aa).

One can recognise a Rieske domain in the interval 8 to 110; the sequence is WYVAALPEEL…VVERDALIWI (103 aa). Residues cysteine 48, histidine 50, cysteine 67, and histidine 70 each coordinate [2Fe-2S] cluster. Residues histidine 159 and histidine 164 each coordinate Fe cation. 3,6-dichloro-2-methoxybenzoate is bound by residues asparagine 229, histidine 250, and tryptophan 284. Fe cation is bound at residue aspartate 293.

In terms of assembly, homotrimer. The dicamba O-demethylase multicomponent enzyme system is composed of an oxygenase component (DdmC) and an electron transfer component formed by a ferredoxin reductase (DdmA) and a ferredoxin (DdmB). In vitro, dicamba O-demethylase assays in which DdmA2 is substituted for DdmA1 demonstrate that the two enzymes possess nearly identical activities. It depends on [2Fe-2S] cluster as a cofactor.

It catalyses the reaction 3,6-dichloro-2-methoxybenzoate + 2 reduced [2Fe-2S]-[ferredoxin] + O2 + 2 H(+) = 3,6-dichlorosalicylate + formaldehyde + 2 oxidized [2Fe-2S]-[ferredoxin] + H2O. Its activity is regulated as follows. Activity enhanced by Fe(2+) and Mg(2+) ions. In terms of biological role, component of the dicamba O-demethylase multicomponent enzyme system involved in the degradation of the herbicide dicamba. In vitro, catalyzes the O-demethylation of 2-methoxy-3,6-dichlorobenzoic acid (dicamba) to yield 3,6-dichlorosalicylic acid (DCSA) via an exocyclic monooxygenation. The protein is Dicamba O-demethylase, oxygenase component of Stenotrophomonas maltophilia (Pseudomonas maltophilia).